We begin with the raw amino-acid sequence, 102 residues long: Carboxysome shell protein CcmK3 (102 aa).

Residues 4 to 90 (AVGVIQTDGF…PPDNVETVMP (87 aa)) enclose the BMC domain.

The protein belongs to the bacterial microcompartments protein family. CcmK subfamily. Interacts stably with CcmK4, forming heterohexamers that can make dodecamers. Heterohexamers have a 1:2 CcmK3:CcmK4 stoichiometry. Upon expression in E.coli forms oligomers that could be dimers or trimers, but never hexamers; bulky residues in the pore region probably preclude the formation of homohexamers.

The protein localises to the carboxysome. A probably non-essential, minor shell protein of the carboxysome, a polyhedral inclusion where RuBisCO (ribulose bisphosphate carboxylase, rbcL-rbcS) is sequestered. Hexamers form sheets that form the facets of the polyhedral carboxysome. In PCC 7418 there are several CcmK paralogs with presumably functional differences. This subunit probably only makes heterohexamers with CcmK4. Heterohexamers can also make dodecamers, formation depends on buffer conditions. This is Carboxysome shell protein CcmK3 from Halothece sp. (strain PCC 7418) (Synechococcus sp. (strain PCC 7418)).